Here is a 237-residue protein sequence, read N- to C-terminus: Maternal B9.10 protein (237 aa).

The protein belongs to the BTG family.

The sequence is that of Maternal B9.10 protein from Xenopus laevis (African clawed frog).